The sequence spans 263 residues: Oxygen-evolving enhancer protein 2, chloroplastic (263 aa).

A chloroplast-targeting transit peptide spans M1–A78. A compositionally biased stretch (low complexity) spans A14–A30. The tract at residues A14–P34 is disordered.

This sequence belongs to the PsbP family.

Its subcellular location is the plastid. It localises to the chloroplast thylakoid membrane. Functionally, may be involved in the regulation of photosystem II. The polypeptide is Oxygen-evolving enhancer protein 2, chloroplastic (Helianthus annuus (Common sunflower)).